The following is a 208-amino-acid chain: RxLR effector protein Avr1 (208 aa).

A signal peptide spans 1 to 22; that stretch reads MGLMHRVLLLATFALLCMHAKA. A RxLR-dEER motif is present at residues 41–54; sequence RQLRTATMSDDEAR. Positions 70–92 are W1-motif; it reads KIESWIQNKVTDDFVLSELKLVR. Positions 93–110 are linker region ln1; it reads LPGTSLADDPNFKLFQKF. The segment at 111–136 is W2-motif; that stretch reads KIGGWLEEKATTTKAWENLGLDSLPF. The Y-motif stretch occupies residues 137 to 157; it reads DQVSKIDEFKTYTQYVTVLNK. Residues 158-170 are linker region ln2; the sequence is KASKLDIDQWHGL. The tract at residues 170-208 is T-region; it reads LLSGGSPEELMAKAMILRTLGRDVLERRVMLGGHVVVPF.

The protein belongs to the RxLR effector family. In terms of assembly, interacts with host exocyst component Sec5.

The protein localises to the secreted. It is found in the host cytoplasm. It localises to the host nucleus. The protein resides in the host peroxisome. Secreted effector that acts as an elicitor of hypersensitive response (HR) specifically on plants carrying defense protein R1, through its interaction with this protein. Also acts as a virulence factor that promotes colonization and suppresses cell death induced by CRN2 as well as callose deposition, a hallmark of basal defense. Interacts with host exocyst component Sec5 and thereby disturbs vesicle trafficking, a cellular process that is important for basal defense. By targeting and stabilizing Sec5 in the cytoplasm, the exocyst complex is thus out of balance and not able to mediate the focal secretion of PR-1 and callose. The protein is RxLR effector protein Avr1 of Phytophthora infestans (strain T30-4) (Potato late blight agent).